Consider the following 785-residue polypeptide: Penicillin-binding protein 1A (785 aa).

The segment at 1 to 61 (MPPDDRLTAV…SGPGGPSGPG (61 aa)) is disordered. Pro residues predominate over residues 33–45 (SPPPKPPPPPPPG). Over residues 46 to 59 (RGGGGPSGPGGPSG) the composition is skewed to gly residues. Residues 77-97 (IAVAVMVLLPLITFGMAYMIV) traverse the membrane as a helical segment. A transglycosylase region spans residues 118–299 (GSEIARIVPP…RWNWVLDGMV (182 aa)). Glu-151 serves as the catalytic Proton donor; for transglycosylase activity. The tract at residues 392-662 (AVVSIDPRTG…EGVKPLVNKW (271 aa)) is transpeptidase. Ser-426 (acyl-ester intermediate; for transpeptidase activity) is an active-site residue. 3 disordered regions span residues 605-626 (SRGH…VQLG), 690-726 (ESFP…QPSV), and 738-785 (GITI…PPPP). Composition is skewed to pro residues over residues 708-721 (PAAP…PTDP) and 743-758 (IGPP…PGAP). Low complexity predominate over residues 759 to 775 (GAPVGPGAPEVPVAPGA).

It is found in the cell membrane. The enzyme catalyses [GlcNAc-(1-&gt;4)-Mur2Ac(oyl-L-Ala-gamma-D-Glu-L-Lys-D-Ala-D-Ala)](n)-di-trans,octa-cis-undecaprenyl diphosphate + beta-D-GlcNAc-(1-&gt;4)-Mur2Ac(oyl-L-Ala-gamma-D-Glu-L-Lys-D-Ala-D-Ala)-di-trans,octa-cis-undecaprenyl diphosphate = [GlcNAc-(1-&gt;4)-Mur2Ac(oyl-L-Ala-gamma-D-Glu-L-Lys-D-Ala-D-Ala)](n+1)-di-trans,octa-cis-undecaprenyl diphosphate + di-trans,octa-cis-undecaprenyl diphosphate + H(+). It catalyses the reaction Preferential cleavage: (Ac)2-L-Lys-D-Ala-|-D-Ala. Also transpeptidation of peptidyl-alanyl moieties that are N-acyl substituents of D-alanine.. Its pathway is cell wall biogenesis; peptidoglycan biosynthesis. Cell wall formation. Synthesis of cross-linked peptidoglycan from the lipid intermediates. The enzyme has a penicillin-insensitive transglycosylase N-terminal domain (formation of linear glycan strands) and a penicillin-sensitive transpeptidase C-terminal domain (cross-linking of the peptide subunits). The chain is Penicillin-binding protein 1A (ponA1) from Mycolicibacterium smegmatis (strain ATCC 700084 / mc(2)155) (Mycobacterium smegmatis).